The chain runs to 438 residues: Tol-Pal system protein TolB (438 aa).

A signal peptide spans Met-1–Ala-21.

The protein belongs to the TolB family. As to quaternary structure, the Tol-Pal system is composed of five core proteins: the inner membrane proteins TolA, TolQ and TolR, the periplasmic protein TolB and the outer membrane protein Pal. They form a network linking the inner and outer membranes and the peptidoglycan layer.

The protein resides in the periplasm. Part of the Tol-Pal system, which plays a role in outer membrane invagination during cell division and is important for maintaining outer membrane integrity. This chain is Tol-Pal system protein TolB, found in Desulfosudis oleivorans (strain DSM 6200 / JCM 39069 / Hxd3) (Desulfococcus oleovorans).